We begin with the raw amino-acid sequence, 93 residues long: Small ribosomal subunit protein uS19 (93 aa).

Belongs to the universal ribosomal protein uS19 family.

Protein S19 forms a complex with S13 that binds strongly to the 16S ribosomal RNA. The protein is Small ribosomal subunit protein uS19 of Dehalococcoides mccartyi (strain ATCC BAA-2100 / JCM 16839 / KCTC 5957 / BAV1).